Reading from the N-terminus, the 367-residue chain is tRNA-dihydrouridine(20a/20b) synthase [NAD(P)+] (367 aa).

Residues 45-47 (PMV) and glutamine 99 contribute to the FMN site. Catalysis depends on cysteine 128, which acts as the Proton donor. FMN is bound by residues lysine 169, histidine 197, 231–233 (NGD), and 255–256 (VR).

It belongs to the Dus family. Dus4 subfamily. FMN is required as a cofactor.

The enzyme catalyses 5,6-dihydrouridine(20a) in tRNA + NADP(+) = uridine(20a) in tRNA + NADPH + H(+). It carries out the reaction 5,6-dihydrouridine(20a) in tRNA + NAD(+) = uridine(20a) in tRNA + NADH + H(+). The catalysed reaction is 5,6-dihydrouridine(20b) in tRNA + NAD(+) = uridine(20b) in tRNA + NADH + H(+). It catalyses the reaction 5,6-dihydrouridine(20b) in tRNA + NADP(+) = uridine(20b) in tRNA + NADPH + H(+). The enzyme catalyses a 5,6-dihydrouridine in mRNA + NAD(+) = a uridine in mRNA + NADH + H(+). It carries out the reaction a 5,6-dihydrouridine in mRNA + NADP(+) = a uridine in mRNA + NADPH + H(+). In terms of biological role, catalyzes the synthesis of dihydrouridine, a modified base found in the D-loop of most tRNAs. Specifically modifies U20a and U20b in cytoplasmic tRNAs. Also able to mediate dihydrouridylation of some mRNAs, thereby affecting their translation. This is tRNA-dihydrouridine(20a/20b) synthase [NAD(P)+] from Saccharomyces cerevisiae (strain ATCC 204508 / S288c) (Baker's yeast).